Reading from the N-terminus, the 311-residue chain is Serine hydrolase-like protein (311 aa).

Residues 27 to 227 (PPVLCLHGWL…FVSKEMFVHS (201 aa)) enclose the AB hydrolase-1 domain. Ser102 is an active-site residue. The residue at position 210 (Ser210) is a Phosphoserine.

It belongs to the AB hydrolase superfamily. In terms of tissue distribution, ubiquitous. High protein expression in skeletal and cardiac muscle.

The protein localises to the cytoplasm. Its subcellular location is the perinuclear region. The protein resides in the peroxisome. Functionally, probable serine hydrolase. May be related to cell muscle hypertrophy. In Mus musculus (Mouse), this protein is Serine hydrolase-like protein (Serhl).